The primary structure comprises 123 residues: Seripauperin-16 (123 aa).

A signal peptide spans 1-20 (MVKLTSIAAGVAAIAAGVAA).

This sequence belongs to the SRP1/TIP1 family. Seripauperin subfamily.

This is Seripauperin-16 (PAU16) from Saccharomyces cerevisiae (strain ATCC 204508 / S288c) (Baker's yeast).